The chain runs to 64 residues: Cecropin-A (64 aa).

The signal sequence occupies residues 1–22; sequence MNFSRIFFFVFACLTALAMVNA. A propeptide spans 23–26 (removed by a dipeptidylpeptidase); that stretch reads APEP. K63 is subject to Lysine amide.

It belongs to the cecropin family. A protein with the same sequence as cecropin A, but lacking the carboxyl blocking group, has been isolated and called cecropin C.

Its subcellular location is the secreted. Functionally, cecropins have lytic and antibacterial activity against several Gram-positive and Gram-negative bacteria. This Hyalophora cecropia (Cecropia moth) protein is Cecropin-A.